A 357-amino-acid chain; its full sequence is Glutamine synthetase root isozyme A (357 aa).

One can recognise a GS beta-grasp domain in the interval 19–99 (IIAEYIWVGG…VICDVYTPAG (81 aa)). In terms of domain architecture, GS catalytic spans 106-357 (KRYNAAKIFS…AETTILWKKP (252 aa)).

The protein belongs to the glutamine synthetase family. In terms of assembly, homooctamer.

The protein localises to the cytoplasm. It catalyses the reaction L-glutamate + NH4(+) + ATP = L-glutamine + ADP + phosphate + H(+). This is Glutamine synthetase root isozyme A (GS3A) from Pisum sativum (Garden pea).